Reading from the N-terminus, the 387-residue chain is Eukaryotic translation initiation factor 3 subunit M (387 aa).

Residues 181–340 enclose the PCI domain; sequence LSSKVMIELL…RKVHISSTMH (160 aa).

This sequence belongs to the eIF-3 subunit M family. In terms of assembly, component of the eukaryotic translation initiation factor 3 (eIF-3) complex. The eIF-3 complex interacts with pix.

Its subcellular location is the cytoplasm. The protein localises to the golgi apparatus. Functionally, component of the eukaryotic translation initiation factor 3 (eIF-3) complex, which is involved in protein synthesis of a specialized repertoire of mRNAs and, together with other initiation factors, stimulates binding of mRNA and methionyl-tRNAi to the 40S ribosome. The eIF-3 complex specifically targets and initiates translation of a subset of mRNAs involved in cell proliferation. The sequence is that of Eukaryotic translation initiation factor 3 subunit M from Drosophila persimilis (Fruit fly).